Here is a 205-residue protein sequence, read N- to C-terminus: Small ribosomal subunit protein uS2 (205 aa).

It belongs to the universal ribosomal protein uS2 family.

This is Small ribosomal subunit protein uS2 from Methanoculleus marisnigri (strain ATCC 35101 / DSM 1498 / JR1).